The sequence spans 122 residues: Alkene monooxygenase system, ferredoxin component (122 aa).

The region spanning 16–111 (VDVCAVDDLW…LKVEGGRVLI (96 aa)) is the Rieske domain. 4 residues coordinate [2Fe-2S] cluster: Cys-55, His-57, Cys-75, and His-78.

This sequence belongs to the bacterial ring-hydroxylating dioxygenase ferredoxin component family. Homodimer. The alkene monooxygenase multicomponent enzyme system is composed of an electron transfer component and a monooxygenase component interacting with the effector protein XamoD. The electron transfer component is composed of a ferredoxin reductase (XamoF) and a ferredoxin (XamoC), and the monooxygenase component is formed by a heterohexamer (dimer of heterotrimers) of two alpha subunits (XamoA), two beta subunits (XamoE) and two gamma subunits (XamoB). It depends on [2Fe-2S] cluster as a cofactor.

The protein resides in the cytoplasm. Ferredoxin component of the alkene monooxygenase multicomponent enzyme system which catalyzes the O2- and NADH-dependent epoxidation of short chain (C2 to C6) alkenes to their corresponding epoxides. Functions as an intermediate electron transfer protein. The polypeptide is Alkene monooxygenase system, ferredoxin component (Xanthobacter autotrophicus (strain ATCC BAA-1158 / Py2)).